The following is a 366-amino-acid chain: MAEKEVTPLTAVKVEALVVMKIIKHCSQVFPTTATGSIVGMDVDGVLEITNTFPFPVVEVPPESHFDNAAPNPAAAAPRAKANTVYQAEMIRMLREVNVDANNVGWYTSANMGNFVNMNVIENQFFYQKEMNERTVALVHDPSRSAQGSLSLRAFRLSPKFMAAFKDNKFTSDELQKSNLKYQDILVELPVEIHNSHLITSFIHQLQNQTQATPAEIPTSLATLESSPFAKQTILAPNFDNLSLSIDPFLEKNCDLLLDSIETHHTETSNFQYYQRSLAREQAKITAWQAKRKAENATRATLKQPPLPEDEWQRLFKLPQEPSRLDSMLNSRQVEQYARQIDSFVSSTTGKMFAVKGNLLPSEIAK.

The MPN domain maps to 12–161; that stretch reads VKVEALVVMK…LRAFRLSPKF (150 aa).

This sequence belongs to the eIF-3 subunit H family. Component of the eukaryotic translation initiation factor 3 (eIF-3) complex.

Its subcellular location is the cytoplasm. In terms of biological role, component of the eukaryotic translation initiation factor 3 (eIF-3) complex, which is involved in protein synthesis of a specialized repertoire of mRNAs and, together with other initiation factors, stimulates binding of mRNA and methionyl-tRNAi to the 40S ribosome. The eIF-3 complex specifically targets and initiates translation of a subset of mRNAs involved in cell proliferation. This chain is Eukaryotic translation initiation factor 3 subunit H, found in Emericella nidulans (strain FGSC A4 / ATCC 38163 / CBS 112.46 / NRRL 194 / M139) (Aspergillus nidulans).